The following is a 219-amino-acid chain: Uracil-DNA glycosylase (219 aa).

Asp63 functions as the Proton acceptor in the catalytic mechanism.

The protein belongs to the uracil-DNA glycosylase (UDG) superfamily. UNG family.

It localises to the cytoplasm. It catalyses the reaction Hydrolyzes single-stranded DNA or mismatched double-stranded DNA and polynucleotides, releasing free uracil.. In terms of biological role, excises uracil residues from the DNA which can arise as a result of misincorporation of dUMP residues by DNA polymerase or due to deamination of cytosine. The chain is Uracil-DNA glycosylase from Mesomycoplasma hyopneumoniae (strain 7448) (Mycoplasma hyopneumoniae).